Consider the following 334-residue polypeptide: MKKIRPLTEADVTAESAFFMQRRQVLKALGISAAALSLPSTAQADLFSWFKGNDRPKAPAGKPLEFSQPAAWRSDLALTPEDKVTGYNNFYEFGLDKADPAANAGSLKTEPWTLKISGEVAKPFTLDYDDLTHRFPLEERIYRMRCVEAWSMVVPWIGFPLYKLLAQAQPTSHAKYVAFETLYAPDDMPGQKDRFIGGGLKYPYVEGLRLDEAMHPLTLMTVGVYGKALPPQNGAPIRLIVPWKYGFKGIKSIVSIKLTRERPLTTWNLSAPNEYGFYANVNPHVDHPRWSQATERFIGSGGILDVQRQPTLLFNGYANEVASLYRGLNLRENF.

A signal peptide (tat-type signal) is located at residues 1–44 (MKKIRPLTEADVTAESAFFMQRRQVLKALGISAAALSLPSTAQA). Mo-molybdopterin contacts are provided by residues Asn88, 91 to 92 (YE), Cys146, Thr181, Asn233, Arg238, and 249 to 251 (GIK).

Belongs to the MsrP family. In terms of assembly, heterodimer of a catalytic subunit (MsrP) and a heme-binding subunit (MsrQ). Requires Mo-molybdopterin as cofactor. Post-translationally, predicted to be exported by the Tat system. The position of the signal peptide cleavage has not been experimentally proven.

The protein resides in the periplasm. It catalyses the reaction L-methionyl-[protein] + a quinone + H2O = L-methionyl-(S)-S-oxide-[protein] + a quinol. It carries out the reaction L-methionyl-[protein] + a quinone + H2O = L-methionyl-(R)-S-oxide-[protein] + a quinol. Part of the MsrPQ system that repairs oxidized periplasmic proteins containing methionine sulfoxide residues (Met-O), using respiratory chain electrons. Thus protects these proteins from oxidative-stress damage caused by reactive species of oxygen and chlorine generated by the host defense mechanisms. MsrPQ is essential for the maintenance of envelope integrity under bleach stress, rescuing a wide series of structurally unrelated periplasmic proteins from methionine oxidation, including the primary periplasmic chaperone SurA and the lipoprotein Pal. The catalytic subunit MsrP is non-stereospecific, being able to reduce both (R-) and (S-) diastereoisomers of methionine sulfoxide. This Salmonella dublin (strain CT_02021853) protein is Protein-methionine-sulfoxide reductase catalytic subunit MsrP.